A 505-amino-acid chain; its full sequence is DNA primase large subunit (505 aa).

The interval 253–270 is interdomain linker; it reads LSHSYTGQDYSTQKNTGK. The interval 266–503 is interacts with PRIM1; the sequence is KNTGKISLDQ…LEMDLEGLEE (238 aa). Cysteine 287, cysteine 367, cysteine 384, and cysteine 424 together coordinate [4Fe-4S] cluster. Residues 300-442 are RNA:DNA duplex binding; it reads HLRHGGRMQY…NVDDCGFSLN (143 aa). Positions 463–486 are disordered; the sequence is KEISQPETPQHKPSTQKTRDAASA. Over residues 467-478 the composition is skewed to polar residues; it reads QPETPQHKPSTQ. Phosphothreonine is present on threonine 470.

Belongs to the eukaryotic-type primase large subunit family. As to quaternary structure, heterodimer of a catalytic subunit PRIM1 and a regulatory subunit PRIM2, also known as the DNA primase complex. Interacts via (C-terminus) with PRIM1. Component of the alpha DNA polymerase complex (also known as the alpha DNA polymerase-primase complex) consisting of four subunits: the catalytic subunit POLA1, the regulatory subunit POLA2, and the primase complex subunits PRIM1 and PRIM2 respectively. Within the complex, POLA1 directly interacts with PRIM2. [4Fe-4S] cluster serves as cofactor.

Its function is as follows. Regulatory subunit of the DNA primase complex and component of the DNA polymerase alpha complex (also known as the alpha DNA polymerase-primase complex) which play an essential role in the initiation of DNA synthesis. During the S phase of the cell cycle, the DNA polymerase alpha complex (composed of a catalytic subunit POLA1, an accessory subunit POLA2 and two primase subunits, the catalytic subunit PRIM1 and the regulatory subunit PRIM2) is recruited to DNA at the replicative forks via direct interactions with MCM10 and WDHD1. The primase subunit of the polymerase alpha complex initiates DNA synthesis by oligomerising short RNA primers on both leading and lagging strands. These primers are initially extended by the polymerase alpha catalytic subunit and subsequently transferred to polymerase delta and polymerase epsilon for processive synthesis on the lagging and leading strand, respectively. In the primase complex, both subunits are necessary for the initial di-nucleotide formation, but the extension of the primer depends only on the catalytic subunit. Binds RNA:DNA duplex and coordinates the catalytic activities of PRIM1 and POLA2 during primase-to-polymerase switch. This Mus musculus (Mouse) protein is DNA primase large subunit (Prim2).